A 635-amino-acid chain; its full sequence is Threonine--tRNA ligase (635 aa).

A TGS domain is found at 1–61 (MINISLSDGS…ENNCKLRILT (61 aa)). Residues 242–533 (DHRKLGRELD…LIEEYAGCFP (292 aa)) form a catalytic region. Zn(2+) contacts are provided by C333, H384, and H510.

It belongs to the class-II aminoacyl-tRNA synthetase family. As to quaternary structure, homodimer. The cofactor is Zn(2+).

It localises to the cytoplasm. The enzyme catalyses tRNA(Thr) + L-threonine + ATP = L-threonyl-tRNA(Thr) + AMP + diphosphate + H(+). In terms of biological role, catalyzes the attachment of threonine to tRNA(Thr) in a two-step reaction: L-threonine is first activated by ATP to form Thr-AMP and then transferred to the acceptor end of tRNA(Thr). Also edits incorrectly charged L-seryl-tRNA(Thr). The sequence is that of Threonine--tRNA ligase from Rickettsia canadensis (strain McKiel).